Here is a 30-residue protein sequence, read N- to C-terminus: Gamma-II crystallin (30 aa).

A Beta/gamma crystallin 'Greek key' domain is found at 1-30 (GKITFYEDRNFQGRCYECSTDCPDLSPYFS).

The protein belongs to the beta/gamma-crystallin family. As to quaternary structure, monomer.

Functionally, crystallins are the dominant structural components of the vertebrate eye lens. This is Gamma-II crystallin from Rhizoprionodon acutus (Milk shark).